The sequence spans 772 residues: Putative ribosomal protein S6 kinase alpha-2 (772 aa).

Residues 17-284 (FALLRVLGKG…VDEIKNHKFM (268 aa)) form the Protein kinase 1 domain. ATP-binding positions include 23–31 (LGKGAYGKV) and Lys-49. The active-site Proton acceptor is the Asp-145. Ser-180, Ser-342, and Ser-347 each carry phosphoserine; by autocatalysis. The AGC-kinase C-terminal domain maps to 285 to 353 (SSIDWDAAVK…VSPSVIFAND (69 aa)). Residues 382–653 (KSDAGLLGKG…MQELTAHMWL (272 aa)) enclose the Protein kinase 2 domain. ATP-binding positions include 388–396 (LGKGAFSVV) and Lys-411. The active-site Proton acceptor is the Asp-500. The tract at residues 706-772 (RGIKRQSGDK…IRETRGSDSS (67 aa)) is disordered. Ser-712 carries the post-translational modification Phosphoserine; by autocatalysis. Composition is skewed to polar residues over residues 718–727 (SGNSKNSRVT) and 739–748 (EMTSSTSRPS).

It belongs to the protein kinase superfamily. AGC Ser/Thr protein kinase family. S6 kinase subfamily. Mg(2+) is required as a cofactor.

The catalysed reaction is L-seryl-[protein] + ATP = O-phospho-L-seryl-[protein] + ADP + H(+). It carries out the reaction L-threonyl-[protein] + ATP = O-phospho-L-threonyl-[protein] + ADP + H(+). Its activity is regulated as follows. Activated by multiple phosphorylations on threonine and serine residues. In terms of biological role, serine/threonine kinase that may play a role in mediating the mitogen- and stress-induced effects on transcription. May repress transcription via phosphorylation of 'Ser-1' of histone H2A. May phosphorylate histone H3. The chain is Putative ribosomal protein S6 kinase alpha-2 (rskn-2) from Caenorhabditis elegans.